The primary structure comprises 172 residues: Austinoid biosynthesis clusters protein J (172 aa).

It belongs to the trt14 isomerase family. In terms of assembly, homodimer.

Its pathway is secondary metabolite biosynthesis; terpenoid biosynthesis. Part of the gene cluster B that mediates the biosynthesis of the fungal meroterpenoid acetoxydehydroaustin. The first step of the pathway is the synthesis of 3,5-dimethylorsellinic acid by the polyketide synthase ausA. 3,5-dimethylorsellinic acid is then prenylated by the polyprenyl transferase ausN. Further epoxidation by the FAD-dependent monooxygenase ausM and cyclization by the probable terpene cyclase ausL lead to the formation of protoaustinoid A. Protoaustinoid A is then oxidized to spiro-lactone preaustinoid A3 by the combined action of the FAD-binding monooxygenases ausB and ausC, and the dioxygenase ausE. Acid-catalyzed keto-rearrangement and ring contraction of the tetraketide portion of preaustinoid A3 by ausJ lead to the formation of preaustinoid A4. The aldo-keto reductase ausK, with the help of ausH, is involved in the next step by transforming preaustinoid A4 into isoaustinone which is in turn hydroxylated by the P450 monooxygenase ausI to form austinolide. The cytochrome P450 monooxygenase ausG then modifies austinolide to austinol. Austinol is further acetylated to austin by the O-acetyltransferase ausP, which spontaneously changes to dehydroaustin. The cytochrome P450 monooxygenase then converts dehydroaustin is into 7-dehydrodehydroaustin. The hydroxylation catalyzed by ausR permits the second O-acetyltransferase ausQ to add an additional acetyl group to the molecule, leading to the formation of acetoxydehydroaustin. Due to genetic rearrangements of the clusters and the subsequent loss of some enzymes, the end product of the Penicillium brasilianum austinoid biosynthesis clusters is acetoxydehydroaustin. The sequence is that of Austinoid biosynthesis clusters protein J from Penicillium brasilianum.